An 85-amino-acid polypeptide reads, in one-letter code: Mitochondrial protein pet191 homolog (85 aa).

Positions H18 to T61 constitute a CHCH domain. The Cx10C motif signature appears at C21–C32. 2 cysteine pairs are disulfide-bonded: C21–C53 and C32–C43. The Cx9C motif motif lies at C43 to C53. Residues R65–Q85 are disordered.

This sequence belongs to the PET191 family.

Its subcellular location is the mitochondrion. Functionally, involved in the assembly of cytochrome c oxidase. The protein is Mitochondrial protein pet191 homolog of Schizosaccharomyces pombe (strain 972 / ATCC 24843) (Fission yeast).